Here is a 317-residue protein sequence, read N- to C-terminus: Melanocyte-stimulating hormone receptor (317 aa).

Residues 1–37 lie on the Extracellular side of the membrane; sequence MAVQGFQRRLLGSLNSTPTAIPQLGLAANQTGARCLE. Residue asparagine 29 is glycosylated (N-linked (GlcNAc...) asparagine). Residues 38–63 form a helical membrane-spanning segment; sequence VSIPDGLFLSLGLVSLVENVLVVATI. The Cytoplasmic portion of the chain corresponds to 64–72; the sequence is AKNRNLHSP. Residues 73 to 93 form a helical membrane-spanning segment; sequence TYCFICCLALSDLLVSGGNVL. Over 94-118 the chain is Extracellular; that stretch reads ETVVILLLEASALAARAAVVQPLDN. Residues 119–140 traverse the membrane as a helical segment; the sequence is VIDVITCSSMVSSLCFLGAIAV. Residues 141–163 are Cytoplasmic-facing; that stretch reads DRYVSIFYALRYHSIVTLPRARQ. A helical membrane pass occupies residues 164–183; sequence AIAAIWVASVLFSTLFIAYY. The Extracellular portion of the chain corresponds to 184–191; that stretch reads DHAAVLLC. Residues 192–211 form a helical membrane-spanning segment; sequence LVVFFLAMLVXMAVLYVHML. Topologically, residues 212-240 are cytoplasmic; that stretch reads ARACQHAQGIARLHKRQRPLHQGFGLKGA. The chain crosses the membrane as a helical span at residues 241 to 266; sequence VTLTILLGIFFLCWGPFFLHLTLIVL. Residues 267-279 lie on the Extracellular side of the membrane; the sequence is CPQHPTCSCIFKN. The chain crosses the membrane as a helical span at residues 280–300; it reads FNLFLTLIICNAIIDPLIYAF. Over 301 to 317 the chain is Cytoplasmic; the sequence is RRQELRRTLKEGLTCSW. Cysteine 315 is lipidated: S-palmitoyl cysteine.

Belongs to the G-protein coupled receptor 1 family. Interacts with MGRN1, but does not undergo MGRN1-mediated ubiquitination; this interaction competes with GNAS-binding and thus inhibits agonist-induced cAMP production. Interacts with OPN3; the interaction results in a decrease in MC1R-mediated cAMP signaling and ultimately a decrease in melanin production in melanocytes.

It localises to the cell membrane. In terms of biological role, receptor for MSH (alpha, beta and gamma) and ACTH. The activity of this receptor is mediated by G proteins which activate adenylate cyclase. Mediates melanogenesis, the production of eumelanin (black/brown) and phaeomelanin (red/yellow), via regulation of cAMP signaling in melanocytes. This Hylobates muelleri (Mueller's Bornean gibbon) protein is Melanocyte-stimulating hormone receptor (MC1R).